A 113-amino-acid chain; its full sequence is Single-stranded DNA-binding protein B (113 aa).

An SSB domain is found at 1-104; it reads MFNQVMLVGR…VLADTVRFMD (104 aa). Y82 carries the phosphotyrosine modification.

As to quaternary structure, homotetramer. Phosphorylated by YwqD, which increases ssDNA affinity; dephosphorylated by YwqE.

Its subcellular location is the cytoplasm. In terms of biological role, not essential for replication of the chromosome, but is required for optimal competence. Binds ssDNA, binding is facilitated by DprA, acts as an accessory factor for homologous DNA strand exchange. This Bacillus subtilis (strain 168) protein is Single-stranded DNA-binding protein B (ssbB).